The primary structure comprises 189 residues: Crossover junction endodeoxyribonuclease RuvC (189 aa).

Catalysis depends on residues Asp-7, Glu-68, and Asp-141. Mg(2+) is bound by residues Asp-7, Glu-68, and Asp-141.

This sequence belongs to the RuvC family. In terms of assembly, homodimer which binds Holliday junction (HJ) DNA. The HJ becomes 2-fold symmetrical on binding to RuvC with unstacked arms; it has a different conformation from HJ DNA in complex with RuvA. In the full resolvosome a probable DNA-RuvA(4)-RuvB(12)-RuvC(2) complex forms which resolves the HJ. Mg(2+) serves as cofactor.

It is found in the cytoplasm. It carries out the reaction Endonucleolytic cleavage at a junction such as a reciprocal single-stranded crossover between two homologous DNA duplexes (Holliday junction).. In terms of biological role, the RuvA-RuvB-RuvC complex processes Holliday junction (HJ) DNA during genetic recombination and DNA repair. Endonuclease that resolves HJ intermediates. Cleaves cruciform DNA by making single-stranded nicks across the HJ at symmetrical positions within the homologous arms, yielding a 5'-phosphate and a 3'-hydroxyl group; requires a central core of homology in the junction. The consensus cleavage sequence is 5'-(A/T)TT(C/G)-3'. Cleavage occurs on the 3'-side of the TT dinucleotide at the point of strand exchange. HJ branch migration catalyzed by RuvA-RuvB allows RuvC to scan DNA until it finds its consensus sequence, where it cleaves and resolves the cruciform DNA. This chain is Crossover junction endodeoxyribonuclease RuvC, found in Rhodococcus jostii (strain RHA1).